Reading from the N-terminus, the 1011-residue chain is Lysosomal alpha-mannosidase (1011 aa).

Positions 1-49 (MGAYARASGVCARGCLDSAGPWTMSRALRPPLPPLCFFLLLLAAAGARA) are cleaved as a signal peptide. Cystine bridges form between C55/C358 and C268/C273. Positions 72 and 74 each coordinate Zn(2+). A glycan (N-linked (GlcNAc...) asparagine) is linked at N133. A Zn(2+)-binding site is contributed by D196. The active-site Nucleophile is the D196. N310 and N367 each carry an N-linked (GlcNAc...) asparagine glycan. Disulfide bonds link C412/C472 and C493/C501. A Zn(2+)-binding site is contributed by H446. N497, N645, N651, N692, N766, N832, N930, and N989 each carry an N-linked (GlcNAc...) asparagine glycan.

The protein belongs to the glycosyl hydrolase 38 family. Zn(2+) serves as cofactor. First processed into 3 peptides of 70 kDa, 42 kDa (D) and 13/15 kDa (E). The 70 kDa peptide is further processed into three peptides (A, B and C). The A, B and C peptides are disulfide-linked. In terms of processing, heavily glycosylated.

The protein resides in the lysosome. The enzyme catalyses Hydrolysis of terminal, non-reducing alpha-D-mannose residues in alpha-D-mannosides.. In terms of biological role, necessary for the catabolism of N-linked carbohydrates released during glycoprotein turnover. Cleaves all known types of alpha-mannosidic linkages. The chain is Lysosomal alpha-mannosidase (MAN2B1) from Homo sapiens (Human).